Reading from the N-terminus, the 263-residue chain is Small ribosomal subunit protein eS4 (263 aa).

One can recognise an S4 RNA-binding domain in the interval 42–104; that stretch reads LPLIIFLRNR…TGENFRLIYD (63 aa).

The protein belongs to the eukaryotic ribosomal protein eS4 family.

This chain is Small ribosomal subunit protein eS4 (RPS4), found in Cricetulus griseus (Chinese hamster).